The primary structure comprises 93 residues: Pancreatic polypeptide prohormone (93 aa).

Residues 1–29 (MPAACRCLFLLLLSACVALLLQPPLGTRG) form the signal peptide. Y65 is modified (tyrosine amide). Residues 89 to 93 (ELMDE) constitute a propeptide that is removed on maturation.

Belongs to the NPY family.

Its subcellular location is the secreted. Functionally, hormone secreted by pancreatic cells that acts as a regulator of pancreatic and gastrointestinal functions probably by signaling through the G protein-coupled receptor NPY4R2. In Canis lupus familiaris (Dog), this protein is Pancreatic polypeptide prohormone (PPY).